A 525-amino-acid polypeptide reads, in one-letter code: Phosphoenolpyruvate carboxykinase (ATP) (525 aa).

Residues R52, Y186, and K192 each coordinate substrate. Residues K192, H211, and 228-236 (GLSGTGKTT) each bind ATP. 2 residues coordinate Mn(2+): K192 and H211. D249 contributes to the Mn(2+) binding site. ATP is bound by residues E277, R314, 433 to 434 (RI), and T439. R314 provides a ligand contact to substrate.

Belongs to the phosphoenolpyruvate carboxykinase (ATP) family. The cofactor is Mn(2+).

Its subcellular location is the cytoplasm. It carries out the reaction oxaloacetate + ATP = phosphoenolpyruvate + ADP + CO2. The protein operates within carbohydrate biosynthesis; gluconeogenesis. In terms of biological role, involved in the gluconeogenesis. Catalyzes the conversion of oxaloacetate (OAA) to phosphoenolpyruvate (PEP) through direct phosphoryl transfer between the nucleoside triphosphate and OAA. In Fusobacterium nucleatum subsp. nucleatum (strain ATCC 25586 / DSM 15643 / BCRC 10681 / CIP 101130 / JCM 8532 / KCTC 2640 / LMG 13131 / VPI 4355), this protein is Phosphoenolpyruvate carboxykinase (ATP).